A 396-amino-acid chain; its full sequence is Elongation factor Tu (396 aa).

The tr-type G domain maps to 10–206 (KPHVNVGTIG…ALDTYIPTPE (197 aa)). The tract at residues 19–26 (GHVDHGKT) is G1. 19-26 (GHVDHGKT) contributes to the GTP binding site. A Mg(2+)-binding site is contributed by Thr-26. The tract at residues 60-64 (GITIN) is G2. The interval 81-84 (DCPG) is G3. GTP is bound by residues 81-85 (DCPGH) and 136-139 (NKCD). Positions 136 to 139 (NKCD) are G4. The interval 174–176 (SAK) is G5.

This sequence belongs to the TRAFAC class translation factor GTPase superfamily. Classic translation factor GTPase family. EF-Tu/EF-1A subfamily. Monomer.

The protein localises to the cytoplasm. The enzyme catalyses GTP + H2O = GDP + phosphate + H(+). In terms of biological role, GTP hydrolase that promotes the GTP-dependent binding of aminoacyl-tRNA to the A-site of ribosomes during protein biosynthesis. The chain is Elongation factor Tu from Polynucleobacter asymbioticus (strain DSM 18221 / CIP 109841 / QLW-P1DMWA-1) (Polynucleobacter necessarius subsp. asymbioticus).